Here is a 245-residue protein sequence, read N- to C-terminus: Type III pantothenate kinase (245 aa).

Position 6–13 (6–13 (DVGNTAMK)) interacts with ATP. Residues Tyr93 and 100 to 103 (GVDR) contribute to the substrate site. The Proton acceptor role is filled by Asp102. Position 121 (Asp121) interacts with K(+). Ser124 is a binding site for ATP. A substrate-binding site is contributed by Thr175.

Belongs to the type III pantothenate kinase family. In terms of assembly, homodimer. NH4(+) serves as cofactor. The cofactor is K(+).

It localises to the cytoplasm. The catalysed reaction is (R)-pantothenate + ATP = (R)-4'-phosphopantothenate + ADP + H(+). Its pathway is cofactor biosynthesis; coenzyme A biosynthesis; CoA from (R)-pantothenate: step 1/5. Functionally, catalyzes the phosphorylation of pantothenate (Pan), the first step in CoA biosynthesis. The chain is Type III pantothenate kinase from Alcanivorax borkumensis (strain ATCC 700651 / DSM 11573 / NCIMB 13689 / SK2).